Here is a 290-residue protein sequence, read N- to C-terminus: HTH-type transcriptional activator RhaR (290 aa).

In terms of domain architecture, HTH araC/xylS-type spans 179–277 (DLIMSALQQS…GMTPRDYRQR (99 aa)). 2 DNA-binding regions (H-T-H motif) span residues 196-217 (ADFC…RQQT) and 244-267 (ISDI…TREA).

Binds DNA as a dimer.

The protein resides in the cytoplasm. Functionally, activates expression of the rhaSR operon in response to L-rhamnose. This is HTH-type transcriptional activator RhaR from Yersinia pestis bv. Antiqua (strain Antiqua).